The following is a 459-amino-acid chain: Cysteine--tRNA ligase (459 aa).

Residue C28 coordinates Zn(2+). The 'HIGH' region signature appears at 30–40 (VTIYDLCHIGH). Zn(2+) is bound by residues C209, H234, and E238. The 'KMSKS' region motif lies at 266–270 (KMSKS). K269 is a binding site for ATP.

It belongs to the class-I aminoacyl-tRNA synthetase family. Monomer. Requires Zn(2+) as cofactor.

It is found in the cytoplasm. It catalyses the reaction tRNA(Cys) + L-cysteine + ATP = L-cysteinyl-tRNA(Cys) + AMP + diphosphate. This Vibrio cholerae serotype O1 (strain ATCC 39541 / Classical Ogawa 395 / O395) protein is Cysteine--tRNA ligase.